We begin with the raw amino-acid sequence, 142 residues long: uncharacterized protein (142 aa).

The Peptidase C39 domain maps to 18–137 (QSSGYSCGPA…KIFTGNVLVV (120 aa)).

This is an uncharacterized protein from Methanothermobacter marburgensis (strain ATCC BAA-927 / DSM 2133 / JCM 14651 / NBRC 100331 / OCM 82 / Marburg) (Methanobacterium thermoautotrophicum).